A 192-amino-acid polypeptide reads, in one-letter code: Cytidylate kinase (192 aa).

7–15 (GPPGSGKST) contacts ATP.

The protein belongs to the cytidylate kinase family. Type 2 subfamily.

The protein localises to the cytoplasm. It catalyses the reaction CMP + ATP = CDP + ADP. The enzyme catalyses dCMP + ATP = dCDP + ADP. In Halobacterium salinarum (strain ATCC 29341 / DSM 671 / R1), this protein is Cytidylate kinase.